The sequence spans 274 residues: Large ribosomal subunit protein uL2 (274 aa).

Disordered regions lie at residues 28-55 and 224-274; these read APHAPLLEKKSKSGGRNNNGRITTRHVG and VAMN…RRRK.

It belongs to the universal ribosomal protein uL2 family. Part of the 50S ribosomal subunit. Forms a bridge to the 30S subunit in the 70S ribosome.

One of the primary rRNA binding proteins. Required for association of the 30S and 50S subunits to form the 70S ribosome, for tRNA binding and peptide bond formation. It has been suggested to have peptidyltransferase activity; this is somewhat controversial. Makes several contacts with the 16S rRNA in the 70S ribosome. The chain is Large ribosomal subunit protein uL2 from Pseudomonas putida (strain GB-1).